Consider the following 214-residue polypeptide: Probable nicotinate-nucleotide adenylyltransferase (214 aa).

Belongs to the NadD family.

It catalyses the reaction nicotinate beta-D-ribonucleotide + ATP + H(+) = deamido-NAD(+) + diphosphate. Its pathway is cofactor biosynthesis; NAD(+) biosynthesis; deamido-NAD(+) from nicotinate D-ribonucleotide: step 1/1. In terms of biological role, catalyzes the reversible adenylation of nicotinate mononucleotide (NaMN) to nicotinic acid adenine dinucleotide (NaAD). This Aeromonas hydrophila subsp. hydrophila (strain ATCC 7966 / DSM 30187 / BCRC 13018 / CCUG 14551 / JCM 1027 / KCTC 2358 / NCIMB 9240 / NCTC 8049) protein is Probable nicotinate-nucleotide adenylyltransferase.